A 182-amino-acid polypeptide reads, in one-letter code: UPF0301 protein NMC1274 (182 aa).

Belongs to the UPF0301 (AlgH) family.

The chain is UPF0301 protein NMC1274 from Neisseria meningitidis serogroup C / serotype 2a (strain ATCC 700532 / DSM 15464 / FAM18).